Here is a 200-residue protein sequence, read N- to C-terminus: Glutathione S-transferase 1-1 (200 aa).

Residues 1 to 73 form the GST N-terminal domain; that stretch reads GSSPCRSVIM…YLVEKYGKTD (73 aa). Residues serine 2, 43-45, and 57-59 each bind glutathione; these read HTI and ESR. A GST C-terminal domain is found at 79–200; it reads CPKKRAVINQ…AGCLEFKKYF (122 aa).

Belongs to the GST superfamily. Theta family. Homodimer.

The enzyme catalyses RX + glutathione = an S-substituted glutathione + a halide anion + H(+). The catalysed reaction is 1,1,1-trichloro-2,2-bis(4-chlorophenyl)ethane = 1,1-dichloro-2,2-bis(4-chlorophenyl)ethylene + chloride + H(+). Functionally, conjugation of reduced glutathione to a wide number of exogenous and endogenous hydrophobic electrophiles. Has DDT dehydrochlorinase activity. The polypeptide is Glutathione S-transferase 1-1 (GstD1) (Drosophila teissieri (Fruit fly)).